Here is a 456-residue protein sequence, read N- to C-terminus: MTSDPLASPSFADRWRRGQQLFWTWLADLRLAILLLLAIAIASATGTVIEQGQSLAFYQENYPTDPALFGFLSWRWILSLGLDHVYRAGWFLGLLILFGASLTACTFRRQWPALRAAQRWQFYQEPRQFTKLALSASLPQGKLDSLEPLLLQRRYRLFRADDVLYARRGLAGRVGPILVHAGMLVVLGGAIWGSLGGFYAQEMIPSGETFQVRNIVDAGPWSGSRIPQDWAVKVNRFWIDYAPDGRIDQFYSDLSVVDREGQEQDRQTIHVNQPLRYGGLTFYQADWAIAAAQVRLNNSPVLQLPMAQLPAAGRIWGTFVPTKPDLSSGVSLIAKDLQGTAVIYGSNGEPLGTLRKGMAIEVEGIRLSLVDLVGSTGLQIKSDPGIPWVYAGFLFVMVGVVCSYVSHAQVWALEQDGQLYIGGRSNRALVAFEQEMLAVLAQLDAQSNHSAETAIA.

The next 3 membrane-spanning stretches (helical) occupy residues 29 to 49 (LRLA…GTVI), 88 to 108 (AGWF…CTFR), and 174 to 194 (VGPI…IWGS).

This sequence belongs to the Ccs1/CcsB family. In terms of assembly, may interact with CcsA.

The protein localises to the cellular thylakoid membrane. Functionally, required during biogenesis of c-type cytochromes (cytochrome c6 and cytochrome f) at the step of heme attachment. This chain is Cytochrome c biogenesis protein CcsB, found in Synechococcus sp. (strain ATCC 27144 / PCC 6301 / SAUG 1402/1) (Anacystis nidulans).